The sequence spans 59 residues: Small ribosomal subunit protein bS21 (59 aa).

The protein belongs to the bacterial ribosomal protein bS21 family.

The chain is Small ribosomal subunit protein bS21 from Acaryochloris marina (strain MBIC 11017).